The following is a 449-amino-acid chain: Ribulose bisphosphate carboxylase large chain (449 aa).

Residue K5 is modified to N6,N6,N6-trimethyllysine. N114 and T164 together coordinate substrate. The Proton acceptor role is filled by K166. K168 serves as a coordination point for substrate. Mg(2+) is bound by residues K192, D194, and E195. K192 is modified (N6-carboxylysine). Residue H285 is the Proton acceptor of the active site. Substrate contacts are provided by R286, H318, and S370.

The protein belongs to the RuBisCO large chain family. Type I subfamily. Heterohexadecamer of 8 large chains and 8 small chains; disulfide-linked. The disulfide link is formed within the large subunit homodimers. Requires Mg(2+) as cofactor. In terms of processing, the disulfide bond which can form in the large chain dimeric partners within the hexadecamer appears to be associated with oxidative stress and protein turnover.

It is found in the plastid. The protein resides in the chloroplast. The enzyme catalyses 2 (2R)-3-phosphoglycerate + 2 H(+) = D-ribulose 1,5-bisphosphate + CO2 + H2O. The catalysed reaction is D-ribulose 1,5-bisphosphate + O2 = 2-phosphoglycolate + (2R)-3-phosphoglycerate + 2 H(+). RuBisCO catalyzes two reactions: the carboxylation of D-ribulose 1,5-bisphosphate, the primary event in carbon dioxide fixation, as well as the oxidative fragmentation of the pentose substrate in the photorespiration process. Both reactions occur simultaneously and in competition at the same active site. The protein is Ribulose bisphosphate carboxylase large chain of Zamioculcas zamiifolia (Aroid palm).